A 255-amino-acid chain; its full sequence is Ribosomal RNA small subunit methyltransferase J (255 aa).

Residues 107-108, 123-124, and aspartate 178 contribute to the S-adenosyl-L-methionine site; these read RD and ER. The disordered stretch occupies residues 228 to 247; it reads ARAEPLSGRKPSHQIPGKTT.

Belongs to the methyltransferase superfamily. RsmJ family.

The protein localises to the cytoplasm. It catalyses the reaction guanosine(1516) in 16S rRNA + S-adenosyl-L-methionine = N(2)-methylguanosine(1516) in 16S rRNA + S-adenosyl-L-homocysteine + H(+). In terms of biological role, specifically methylates the guanosine in position 1516 of 16S rRNA. The chain is Ribosomal RNA small subunit methyltransferase J from Thioalkalivibrio sulfidiphilus (strain HL-EbGR7).